A 412-amino-acid polypeptide reads, in one-letter code: Alanyl-tRNA editing protein Aarsd1 (412 aa).

Zn(2+) is bound by residues H109 and H113. S174 bears the Phosphoserine mark. Zn(2+) contacts are provided by C209 and H213.

Belongs to the class-II aminoacyl-tRNA synthetase family. Alax-L subfamily. Requires Zn(2+) as cofactor.

The protein localises to the cytoplasm. Functionally, functions in trans to edit the amino acid moiety from incorrectly charged Ser-tRNA(Ala). In Mus musculus (Mouse), this protein is Alanyl-tRNA editing protein Aarsd1 (Aarsd1).